Reading from the N-terminus, the 331-residue chain is Biotin synthase (331 aa).

The Radical SAM core domain occupies 52 to 277 (PDVEVEGIIS…RTMLRFAGGR (226 aa)). Cys-67, Cys-71, and Cys-74 together coordinate [4Fe-4S] cluster. Residues Cys-110, Cys-143, Cys-202, and Arg-272 each contribute to the [2Fe-2S] cluster site.

It belongs to the radical SAM superfamily. Biotin synthase family. Homodimer. [4Fe-4S] cluster is required as a cofactor. The cofactor is [2Fe-2S] cluster.

The catalysed reaction is (4R,5S)-dethiobiotin + (sulfur carrier)-SH + 2 reduced [2Fe-2S]-[ferredoxin] + 2 S-adenosyl-L-methionine = (sulfur carrier)-H + biotin + 2 5'-deoxyadenosine + 2 L-methionine + 2 oxidized [2Fe-2S]-[ferredoxin]. The protein operates within cofactor biosynthesis; biotin biosynthesis; biotin from 7,8-diaminononanoate: step 2/2. Its function is as follows. Catalyzes the conversion of dethiobiotin (DTB) to biotin by the insertion of a sulfur atom into dethiobiotin via a radical-based mechanism. The protein is Biotin synthase of Mycolicibacterium gilvum (strain PYR-GCK) (Mycobacterium gilvum (strain PYR-GCK)).